Here is a 583-residue protein sequence, read N- to C-terminus: MAGSEQQRPRRRDDGDSDAAAAAAAPLQDAELALAGINMLLNNGFRESDQLFKQYRNHSPLMSFGASFVSFLNAMMTFEEEKMQLACDDLKTTEKLCESEEAGVIETIKNKIKKNVDVRKSAPSMVDRLQRQIIIADCQVYLAVLSFVKQELSAYIKGGWILRKAWKIYNKCYLDINALQELYQKKLTEESLTSDAANDNHIVAEGVSEESLNRLKGAVSFGYGLFHLCISMVPPNLLKIINLLGFPGDRLQGLSSLMYASESKDMKAPLATLALLWYHTVVRPFFALDGSDNKAGLDEAKEILLKKEAAYPNSSLFMFFKGRIQRLECQINSALTSFHTALELAVDQREIQHVCLYEIGWCSMIELNFKDAFDSFERLKNESRWSQCYYAYLTAVCQGATGDVDGAQIVFKEVQKLFKRKNNQIEQFSVKKAERFRKQTPTKALCVLASIEVLYLWKALPNCSFPNLQRMSQACHEVDDSSVVGLKYLLLGAIHKCLGNSEDAVQYFQRAVKDELCRQNNLYVQPYACYELGCLLLDKPETVGRGRALLLQAKEDFSGYDFENRLHVRIHAALASLRELVPQ.

The tract at residues 1-22 (MAGSEQQRPRRRDDGDSDAAAA) is disordered. TPR repeat units follow at residues 315–348 (SLFMFFKGRIQRLECQINSALTSFHTALELAVDQ), 353–386 (HVCLYEIGWCSMIELNFKDAFDSFERLKNESRWS), and 485–518 (GLKYLLLGAIHKCLGNSEDAVQYFQRAVKDELCR).

This sequence belongs to the TTC39 family.

In Homo sapiens (Human), this protein is Tetratricopeptide repeat protein 39C (TTC39C).